The following is a 35-amino-acid chain: Ranatuerin-2SPb (35 aa).

The cysteines at positions 28 and 33 are disulfide-linked.

In terms of tissue distribution, expressed by the skin glands.

The protein resides in the secreted. Functionally, antibacterial activity against Gram-positive bacterium S.aureus. Shows no detectable hemolytic activity towards human erythrocytes. This chain is Ranatuerin-2SPb, found in Lithobates septentrionalis (Mink frog).